The sequence spans 957 residues: Outer kinetochore KNL1 complex subunit knl-1 (957 aa).

Copy 1 of the repeat occupies 87 to 90 (MDIT). Residues 87-393 (MDITGLNSTP…NFDDVAMDIT (307 aa)) form an 8 X 4 AA repeats of M-[D/E]-[I/L/M]-[S/T] region. The interval 89–111 (ITGLNSTPVTPKTQTPFNGSMDM) is disordered. Over residues 91–106 (GLNSTPVTPKTQTPFN) the composition is skewed to polar residues. Tandem repeats lie at residues 109–112 (MDMS), 206–209 (MDIT), 251–254 (MDIT), 282–285 (MDLT), 326–329 (MEMT), 367–370 (MEMT), and 390–393 (MDIT). The tract at residues 476–504 (SLQQSSMRMSTTITEDVTASKNPESSTIS) is disordered. A coiled-coil region spans residues 830–950 (KFAKESNVEI…RKKKEEMVER (121 aa)).

As to quaternary structure, component of the KNL1 complex composed of knl-1 and kbp-5. Part of the ten-subunit outer kinetochore KMN network that includes the KNL1, MIS12 and NDC80 complexes. Interacts with the protein phosphatase 1 (PP1) catalytic subunit gsp-1; the interaction is direct. Interacts with the protein phosphatase 1 (PP1) catalytic subunit gsp-2; the interaction is direct. Interacts with the MIS12 complex subunits kbp-1, kbp-2 and mis-12. Interacts with the NDC80 complex components ndc-80 and him-10. Interacts with knl-3. Interacts with kbp-3. Interacts with kbp-4. Interacts with kbp-5.

It is found in the cytoplasm. The protein resides in the cell cortex. The protein localises to the chromosome. Its subcellular location is the centromere. It localises to the kinetochore. Acts as a component of the outer kinetochore KNL1 complex that serves as a docking point for spindle assembly checkpoint components and mediates microtubule-kinetochore interactions. Kinetochores, consisting of a centromere-associated inner segment and a microtubule-contacting outer segment, play a crucial role in chromosome segregation by mediating the physical connection between centromeric DNA and spindle microtubules. The outer kinetochore is made up of the ten-subunit KMN network, comprising the MIS12, NDC80 and KNL1 complexes, and auxiliary microtubule-associated components; together they connect the outer kinetochore with the inner kinetochore, bind microtubules, and mediate interactions with mitotic checkpoint proteins that delay anaphase until chromosomes are bioriented on the spindle. Binds the protein phosphatase 1 catalytic subunits gsp-1 and gsp-2, which has a role in delaying formation of load-bearing kinetochore-microtubule attachments. Required for the recruitment of spindle-assembly checkpoint components bub-1 and mdf-1/2 to unattached kinetochores. Binds microtubules which plays a role in silencing of the spindle assembly checkpoint, but not the formation of load-bearing microtubule-kinetochore attachments. Has a role in the correct localization of the spindly-like protein spdl-1 and the RZZ complex that is composed of rod-1, czw-1 and zwl-1 to kinetochores. This Caenorhabditis briggsae protein is Outer kinetochore KNL1 complex subunit knl-1.